The primary structure comprises 212 residues: uncharacterized protein (212 aa).

Belongs to the flavoredoxin family. The cofactor is FMN.

This is an uncharacterized protein from Methanothermobacter thermautotrophicus (strain ATCC 29096 / DSM 1053 / JCM 10044 / NBRC 100330 / Delta H) (Methanobacterium thermoautotrophicum).